We begin with the raw amino-acid sequence, 141 residues long: Galactose-6-phosphate isomerase subunit LacA (141 aa).

The protein belongs to the LacAB/RpiB family. In terms of assembly, heteromultimeric protein consisting of LacA and LacB.

It catalyses the reaction aldehydo-D-galactose 6-phosphate = keto-D-tagatose 6-phosphate. The protein operates within carbohydrate metabolism; D-galactose 6-phosphate degradation; D-tagatose 6-phosphate from D-galactose 6-phosphate: step 1/1. The polypeptide is Galactose-6-phosphate isomerase subunit LacA (Streptococcus equi subsp. equi (strain 4047)).